Consider the following 476-residue polypeptide: Cytosolic iron-sulfur assembly component 3 (476 aa).

Ala-2 carries the post-translational modification N-acetylalanine. Cys-24, Cys-71, Cys-74, Cys-77, Cys-190, Cys-246, Cys-395, and Cys-399 together coordinate [4Fe-4S] cluster.

It belongs to the NARF family. External component of the CIA complex. In the CIA complex, interacts directly with CIAO1 and MMS19.

Its function is as follows. Component of the cytosolic iron-sulfur protein assembly (CIA) complex, a multiprotein complex that mediates the incorporation of iron-sulfur cluster into extramitochondrial Fe/S proteins. Seems to negatively regulate the level of HIF1A expression, although this effect could be indirect. This is Cytosolic iron-sulfur assembly component 3 from Pongo abelii (Sumatran orangutan).